The primary structure comprises 387 residues: Eukaryotic translation initiation factor 3 subunit M (387 aa).

The region spanning 181 to 340 (LSSKVMIELL…HKVHITSTMH (160 aa)) is the PCI domain.

Belongs to the eIF-3 subunit M family. As to quaternary structure, component of the eukaryotic translation initiation factor 3 (eIF-3) complex. The eIF-3 complex interacts with pix.

Its subcellular location is the cytoplasm. It localises to the golgi apparatus. Its function is as follows. Component of the eukaryotic translation initiation factor 3 (eIF-3) complex, which is involved in protein synthesis of a specialized repertoire of mRNAs and, together with other initiation factors, stimulates binding of mRNA and methionyl-tRNAi to the 40S ribosome. The eIF-3 complex specifically targets and initiates translation of a subset of mRNAs involved in cell proliferation. The protein is Eukaryotic translation initiation factor 3 subunit M of Drosophila erecta (Fruit fly).